A 631-amino-acid chain; its full sequence is Chaperone protein DnaK (631 aa).

A Phosphothreonine; by autocatalysis modification is found at T197. The interval 598–631 (MYKKEQGQTGGTEQGGTEQKKSGGDDDVIDAEVE) is disordered. Positions 622–631 (DDDVIDAEVE) are enriched in acidic residues.

It belongs to the heat shock protein 70 family.

In terms of biological role, acts as a chaperone. This Nitratiruptor sp. (strain SB155-2) protein is Chaperone protein DnaK.